Reading from the N-terminus, the 188-residue chain is ATP-dependent Clp protease proteolytic subunit 1 (188 aa).

The Nucleophile role is filled by Ser90. The active site involves His115.

Belongs to the peptidase S14 family. Fourteen ClpP subunits assemble into 2 heptameric rings which stack back to back to give a disk-like structure with a central cavity, resembling the structure of eukaryotic proteasomes.

Its subcellular location is the cytoplasm. It carries out the reaction Hydrolysis of proteins to small peptides in the presence of ATP and magnesium. alpha-casein is the usual test substrate. In the absence of ATP, only oligopeptides shorter than five residues are hydrolyzed (such as succinyl-Leu-Tyr-|-NHMec, and Leu-Tyr-Leu-|-Tyr-Trp, in which cleavage of the -Tyr-|-Leu- and -Tyr-|-Trp bonds also occurs).. In terms of biological role, cleaves peptides in various proteins in a process that requires ATP hydrolysis. Has a chymotrypsin-like activity. Plays a major role in the degradation of misfolded proteins. This chain is ATP-dependent Clp protease proteolytic subunit 1, found in Corynebacterium jeikeium (strain K411).